Here is a 78-residue protein sequence, read N- to C-terminus: UPF0291 protein MCCL_0996 (78 aa).

This sequence belongs to the UPF0291 family.

The protein resides in the cytoplasm. This chain is UPF0291 protein MCCL_0996, found in Macrococcus caseolyticus (strain JCSC5402) (Macrococcoides caseolyticum).